Reading from the N-terminus, the 977-residue chain is Serine/threonine-protein kinase N2 (977 aa).

REM-1 domains lie at 24–100, 114–194, and 200–280; these read NLDF…HIVV, DTPK…TSEI, and DVTT…ELPK. Positions 298–468 constitute a C2 domain; that stretch reads PPNSPRQSIM…LYLEPQGTLF (171 aa). Disordered stretches follow at residues 342-381 and 531-576; these read GRSKTASVSLPGWSPSEARSSFMSRGNKNKSGSSRTLSKS and AADL…KRNS. Over residues 358-378 the composition is skewed to polar residues; the sequence is EARSSFMSRGNKNKSGSSRTL. The region spanning 650 to 909 is the Protein kinase domain; the sequence is FKCVAVLGRG…AEEVKRHPFF (260 aa). ATP is bound by residues 656–664 and Lys679; that span reads LGRGHFGKV. Asp775 serves as the catalytic Proton acceptor. Positions 910–977 constitute an AGC-kinase C-terminal domain; it reads RDMDWPGLLA…ADFDYIADWC (68 aa).

Belongs to the protein kinase superfamily. AGC Ser/Thr protein kinase family. PKC subfamily. In terms of processing, autophosphorylated. Phosphorylated. Proteolytically cleaved.

It localises to the cytoplasm. The protein resides in the nucleus. It is found in the membrane. The protein localises to the cell projection. Its subcellular location is the lamellipodium. It localises to the cytoskeleton. The protein resides in the cleavage furrow. It is found in the midbody. The protein localises to the cell junction. It catalyses the reaction L-seryl-[protein] + ATP = O-phospho-L-seryl-[protein] + ADP + H(+). It carries out the reaction L-threonyl-[protein] + ATP = O-phospho-L-threonyl-[protein] + ADP + H(+). Kinase activity is activated upon binding to GTP-bound Rho/Rac GTPases. Activated by lipids, particularly cardiolipin and to a lesser extent by other acidic phospholipids and unsaturated fatty acids. Two specific sites, Thr-809 (activation loop of the kinase domain) and Thr-951 (turn motif), may be needed to be phosphorylated for its full activation. Its function is as follows. Pkc-related serine/threonine-protein kinase and Rho/Rac effector protein that participates in specific signal transduction responses in the cell. May play a role in the regulation of cell cycle progression, actin cytoskeleton assembly, cell migration, cell adhesion and transcription activation signaling processes. This Danio rerio (Zebrafish) protein is Serine/threonine-protein kinase N2 (pkn2).